Here is a 370-residue protein sequence, read N- to C-terminus: Apolipoprotein A-V (370 aa).

The N-terminal stretch at 1–21 is a signal peptide; it reads MASMIALLTWALALLPALASA. S59 is modified (phosphoserine).

It belongs to the apolipoprotein A1/A4/E family. In terms of assembly, interacts with GPIHBP1. Interacts with SORL1; this interaction leads to APOA5 internalization and sorting either to lysosomes and degradation, or to the trans-Golgi network.

The protein localises to the secreted. The protein resides in the early endosome. Its subcellular location is the late endosome. It localises to the golgi apparatus. It is found in the trans-Golgi network. Its function is as follows. Minor apolipoprotein mainly associated with HDL and to a lesser extent with VLDL. May also be associated with chylomicrons. Important determinant of plasma triglyceride (TG) levels by both being a potent stimulator of apo-CII lipoprotein lipase (LPL) TG hydrolysis and an inhibitor of the hepatic VLDL-TG production rate (without affecting the VLDL-apoB production rate). Activates poorly lecithin:cholesterol acyltransferase (LCAT) and does not enhance efflux of cholesterol from macrophages. Binds heparin. In Acinonyx jubatus (Cheetah), this protein is Apolipoprotein A-V (APOA5).